Consider the following 625-residue polypeptide: Chaperone protein DnaK (625 aa).

A Phosphothreonine; by autocatalysis modification is found at T197. The interval 598–625 (MYKKDDNASGEQSGGKKKDDDVIDAEVE) is disordered.

It belongs to the heat shock protein 70 family.

Its function is as follows. Acts as a chaperone. The protein is Chaperone protein DnaK of Campylobacter curvus (strain 525.92).